Reading from the N-terminus, the 264-residue chain is Thymidylate synthase (264 aa).

DUMP is bound by residues Arg21 and 126-127 (RR). Cys146 acts as the Nucleophile in catalysis. DUMP contacts are provided by residues 166–169 (RSAD), Asn177, and 207–209 (HLY). A (6R)-5,10-methylene-5,6,7,8-tetrahydrofolate-binding site is contributed by Asp169. Ala263 provides a ligand contact to (6R)-5,10-methylene-5,6,7,8-tetrahydrofolate.

The protein belongs to the thymidylate synthase family. Bacterial-type ThyA subfamily. In terms of assembly, homodimer.

The protein localises to the cytoplasm. It catalyses the reaction dUMP + (6R)-5,10-methylene-5,6,7,8-tetrahydrofolate = 7,8-dihydrofolate + dTMP. It participates in pyrimidine metabolism; dTTP biosynthesis. Functionally, catalyzes the reductive methylation of 2'-deoxyuridine-5'-monophosphate (dUMP) to 2'-deoxythymidine-5'-monophosphate (dTMP) while utilizing 5,10-methylenetetrahydrofolate (mTHF) as the methyl donor and reductant in the reaction, yielding dihydrofolate (DHF) as a by-product. This enzymatic reaction provides an intracellular de novo source of dTMP, an essential precursor for DNA biosynthesis. This chain is Thymidylate synthase, found in Bradyrhizobium diazoefficiens (strain JCM 10833 / BCRC 13528 / IAM 13628 / NBRC 14792 / USDA 110).